Reading from the N-terminus, the 447-residue chain is Tubulin beta-5 chain (447 aa).

Residues Gln11, Glu69, Ser138, Gly142, Thr143, Gly144, Asn204, and Asn226 each contribute to the GTP site. Mg(2+) is bound at residue Glu69.

It belongs to the tubulin family. Dimer of alpha and beta chains. A typical microtubule is a hollow water-filled tube with an outer diameter of 25 nm and an inner diameter of 15 nM. Alpha-beta heterodimers associate head-to-tail to form protofilaments running lengthwise along the microtubule wall with the beta-tubulin subunit facing the microtubule plus end conferring a structural polarity. Microtubules usually have 13 protofilaments but different protofilament numbers can be found in some organisms and specialized cells. Mg(2+) is required as a cofactor.

The protein resides in the cytoplasm. It localises to the cytoskeleton. In terms of biological role, tubulin is the major constituent of microtubules, a cylinder consisting of laterally associated linear protofilaments composed of alpha- and beta-tubulin heterodimers. Microtubules grow by the addition of GTP-tubulin dimers to the microtubule end, where a stabilizing cap forms. Below the cap, tubulin dimers are in GDP-bound state, owing to GTPase activity of alpha-tubulin. The polypeptide is Tubulin beta-5 chain (TUBB5) (Triticum aestivum (Wheat)).